The chain runs to 760 residues: Striatin-4 (760 aa).

The tract at residues 1 to 65 (MMEERAAAAV…PTAGPEPLSL (65 aa)) is disordered. Over residues 7-35 (AAAVASAASSCRPLGSGTAPNPTAAAPAS) the composition is skewed to low complexity. Over residues 43 to 54 (PVGKGGGGGGSP) the composition is skewed to gly residues. Serine 53 is subject to Phosphoserine. The stretch at 69–136 (LHFIQHEWAR…QERAKYHKLK (68 aa)) forms a coiled coil. Positions 71-79 (FIQHEWARF) are caveolin-binding. The tract at residues 165 to 182 (ENSPLVWKEGRQLLRQYL) is calmodulin-binding. A phosphoserine mark is found at serine 206, serine 223, and serine 276. Disordered regions lie at residues 210-233 (NGAG…SGGE) and 272-346 (EDED…PHEL). Acidic residues-rich tracts occupy residues 272 to 283 (EDEDSDEDDELD) and 302 to 317 (EMED…DAIN). The span at 332-346 (PDPRRCTSEGNPHEL) shows a compositional bias: basic and acidic residues. 7 WD repeats span residues 443–482 (SHYD…TAKK), 496–535 (AHRG…MDPY), 549–588 (GHGD…PSCL), 595–635 (GEHG…ALLT), 642–681 (SGPA…SVHS), 684–723 (AHLD…CVQE), and 730–759 (KHEE…AKVF).

The protein belongs to the WD repeat striatin family. In terms of assembly, part of the core of STRIPAK complexes composed of PP2A catalytic and scaffolding subunits, the striatins (PP2A regulatory subunits), the striatin-associated proteins MOB4, STRIP1 and STRIP2, PDCD10 and members of the STE20 kinases, such as STK24 and STK26. Interacts with CTTNBP2NL. In terms of tissue distribution, mainly expressed in brain but is also expressed at low levels in the kidney.

Its subcellular location is the cytoplasm. It is found in the membrane. It localises to the cell projection. The protein localises to the dendritic spine. Calmodulin-binding scaffolding protein which is the center of the striatin-interacting phosphatase and kinase (STRIPAK) complexes. STRIPAK complexes have critical roles in protein (de)phosphorylation and are regulators of multiple signaling pathways including Hippo, MAPK, nuclear receptor and cytoskeleton remodeling. Different types of STRIPAK complexes are involved in a variety of biological processes such as cell growth, differentiation, apoptosis, metabolism and immune regulation. Key regulator of the expanded Hippo signaling pathway by interacting and allowing the inhibition of MAP4K kinases by the STRIPAK complex. In Mus musculus (Mouse), this protein is Striatin-4 (Strn4).